A 56-amino-acid chain; its full sequence is TauPI-stichotoxin-Hcr2d (56 aa).

The BPTI/Kunitz inhibitor domain maps to 4–54; that stretch reads CLEPKVVGPCTAYFPRFYFNSETGKCTPFIYGGCEGNGNNFETLRACRGIC. 3 cysteine pairs are disulfide-bonded: Cys-4-Cys-54, Cys-13-Cys-37, and Cys-29-Cys-50.

This sequence belongs to the venom Kunitz-type family. Sea anemone type 2 potassium channel toxin subfamily.

Its subcellular location is the secreted. The protein resides in the nematocyst. Functionally, this protease inhibitor shows two different activities, it inhibits both the capsaicin receptor TRPV1 and serine proteases. It partially blocks the capsaicin- and acid-induced response of TRPV1, a receptor of the pain pathway. It also weakly inhibits trypsin and chymotrypsin activity (Ki=0.5 uM and Ki=7 uM, respectively). In addition, it may also alter tachykinin levels by suppressing endogenous proteases. In vivo, it shows antinociceptive and analgesic activities. It significantly prolongs paw withdrawal latency and blocks heat-induced and chemical-induced acute pain. In addition, it also shows anti-inflammatory and analgesic effects in models of osteoarthritis and rheumatoid arthritis. In vivo, unlike other TRPV1 antagonists whose activity is associated with hyperthermia, this protein has the remarkable feature of dropping core body temperature. In Radianthus crispa (Leathery sea anemone), this protein is TauPI-stichotoxin-Hcr2d.